The sequence spans 280 residues: Orotidine 5'-phosphate decarboxylase (280 aa).

Lysine 97 serves as the catalytic Proton donor.

This sequence belongs to the OMP decarboxylase family. Type 2 subfamily.

The enzyme catalyses orotidine 5'-phosphate + H(+) = UMP + CO2. It functions in the pathway pyrimidine metabolism; UMP biosynthesis via de novo pathway; UMP from orotate: step 2/2. This Corynebacterium efficiens (strain DSM 44549 / YS-314 / AJ 12310 / JCM 11189 / NBRC 100395) protein is Orotidine 5'-phosphate decarboxylase (pyrF).